Reading from the N-terminus, the 512-residue chain is MESVIFSINGEIIQVNKEIITASPYNFFKRIQDHHLKDEAIILNGINYHAFESLLDYMRWKKINITINNVEMILVAAVIIDVPPVVDLCVKTMIHNINSTNCIRMFNFSKRYGIKKLYNASMSEIINNITAVTSDPEFGKLSKDELTTILSHEDVNVNHEDVTAMILLKWIHKNPNDVDIINILHPKFMTNTMRNAISLLGLTISKSTKPVTRNGIKHNIVVIKNSDYISTITHYSPRTEYWTIVGNTDRQFYNANVLHNCLYIIGGMINNRHVYSVSRVDLETKKWKTVTNMSSLKSEVSTCVNDGKLYVIGGLEFSISTGVAEYLKHGTSKWIRLPNLITPRYSGASVFVNDDIYVMGGVYTTYEKYVVLNDVECFTKNRWIKKSPMPRHHSIVYAVEYDGDIYVITGITHETRNYLYKYIVKEDKWIELYMYFNHVGKMFVCSCGDYILIIADAKYEYYPKSNTWNLFDMSTRNIEYYDMFTKDETPKCNVTHKSLPSFLSNCEKQFLQ.

In terms of domain architecture, BTB spans 2–67; it reads ESVIFSINGE…MRWKKINITI (66 aa). 6 Kelch repeats span residues 216 to 261, 262 to 307, 309 to 354, 356 to 403, 405 to 449, and 452 to 498; these read IKHN…LHNC, LYII…VNDG, LYVI…FVND, IYVM…EYDG, IYVI…SCGD, and LIIA…THKS.

It belongs to the poxviruses Kelch family.

The chain is Kelch repeat protein C2 from Vaccinia virus (strain Copenhagen) (VACV).